The chain runs to 184 residues: uncharacterized protein (184 aa).

Belongs to the PhzF family.

It localises to the cytoplasm. The protein localises to the nucleus. This is an uncharacterized protein from Schizosaccharomyces pombe (strain 972 / ATCC 24843) (Fission yeast).